Consider the following 124-residue polypeptide: Small ribosomal subunit protein uS12 (124 aa).

The tract at residues 1–20 is disordered; it reads MATISQLVRNPRKDKVQKTS. Asp-89 bears the 3-methylthioaspartic acid mark. The segment at 104–124 is disordered; sequence TSGVTARRKGRSKYGAKRPKA. A compositionally biased stretch (basic residues) spans 109 to 124; the sequence is ARRKGRSKYGAKRPKA.

This sequence belongs to the universal ribosomal protein uS12 family. In terms of assembly, part of the 30S ribosomal subunit. Contacts proteins S8 and S17. May interact with IF1 in the 30S initiation complex.

In terms of biological role, with S4 and S5 plays an important role in translational accuracy. Functionally, interacts with and stabilizes bases of the 16S rRNA that are involved in tRNA selection in the A site and with the mRNA backbone. Located at the interface of the 30S and 50S subunits, it traverses the body of the 30S subunit contacting proteins on the other side and probably holding the rRNA structure together. The combined cluster of proteins S8, S12 and S17 appears to hold together the shoulder and platform of the 30S subunit. In Psychromonas ingrahamii (strain DSM 17664 / CCUG 51855 / 37), this protein is Small ribosomal subunit protein uS12.